The sequence spans 473 residues: MTKEDWEAVIGLEVHAQVSSNTKLFSSSSTEFGAEHNTQVSLVDAAMPGTLPILNYYCIEQAIRTGLALSAEINKYSYFDRKNYFYPDLPQGYQITQFFEPIVKNGRVFINDNEKEIRIARIHLEQDAGKSVHEESKTYVDLNRAGVALIEIVSEPDLRSSAEAAECMKKLRQILRYTGSCDGDMEKGSLRCDANVSVRLKGSNTFGTRCEIKNLNSIRHIVQAIDYEIQRQIEILESGEEISQDTLLFDVASGKTKVMRSKEDASDYRYFPEPDLLPVEVSQEKIDLIQSSLPELPDQKKLRYIEELGINEYDANVITSDKAIADYFEELIKKHDSKLAVTWLTVELFGRLNKANIDIVSSPIKANALSELLDFIVDGTISAKLGKQVFDIMFETGKPASLIIEEQDLKQITDKCQISEVIDKIINSNQDKVQEYKSGKTRLYGFFVGEVMKLTKGKASPDVVNSILSERLG.

The protein belongs to the GatB/GatE family. GatB subfamily. Heterotrimer of A, B and C subunits.

It catalyses the reaction L-glutamyl-tRNA(Gln) + L-glutamine + ATP + H2O = L-glutaminyl-tRNA(Gln) + L-glutamate + ADP + phosphate + H(+). It carries out the reaction L-aspartyl-tRNA(Asn) + L-glutamine + ATP + H2O = L-asparaginyl-tRNA(Asn) + L-glutamate + ADP + phosphate + 2 H(+). Its function is as follows. Allows the formation of correctly charged Asn-tRNA(Asn) or Gln-tRNA(Gln) through the transamidation of misacylated Asp-tRNA(Asn) or Glu-tRNA(Gln) in organisms which lack either or both of asparaginyl-tRNA or glutaminyl-tRNA synthetases. The reaction takes place in the presence of glutamine and ATP through an activated phospho-Asp-tRNA(Asn) or phospho-Glu-tRNA(Gln). The protein is Aspartyl/glutamyl-tRNA(Asn/Gln) amidotransferase subunit B of Wolbachia sp. subsp. Drosophila simulans (strain wRi).